Consider the following 306-residue polypeptide: MSVNLNNNKNNKNKVAIGFISGSLASICATTVTNPIELVKTRLQLQGELQLSQRIYNGVWDAFKQIYKTEGIRGLQSGLIPAYFSQATMQGIRLGSFDLISNALGAKPNQDYFFLKNLLAGATAGAIGAAAGSPFDLVKVRMQAANMYKNDPQFVGYSSSFAAFKQIIQKEGFKGLTRGMLTSAQRTAVGSAIQLSTYGSCKNLVLNFVDDGIYAYIISSMVAGFIVTFGMNPFDVARTRLYFQGKGNSHGEIYKGLMDCVYKTVKKEGFGAVYKGFWAHYLRLGPHTILTLVFWEQFKKLFSGEL.

The Mitochondrial intermembrane segment spans residues 1-15 (MSVNLNNNKNNKNKV). Solcar repeat units follow at residues 13–103 (NKVA…ISNA), 112–204 (YFFL…CKNL), and 211–301 (DGIY…FKKL). The chain crosses the membrane as a helical span at residues 16–36 (AIGFISGSLASICATTVTNPI). Residues 37–83 (ELVKTRLQLQGELQLSQRIYNGVWDAFKQIYKTEGIRGLQSGLIPAY) lie on the Mitochondrial matrix side of the membrane. The helical transmembrane segment at 84-103 (FSQATMQGIRLGSFDLISNA) threads the bilayer. The Mitochondrial intermembrane segment spans residues 104–117 (LGAKPNQDYFFLKN). Residues 118–138 (LLAGATAGAIGAAAGSPFDLV) traverse the membrane as a helical segment. Over 139-174 (KVRMQAANMYKNDPQFVGYSSSFAAFKQIIQKEGFK) the chain is Mitochondrial matrix. Residues 175–195 (GLTRGMLTSAQRTAVGSAIQL) traverse the membrane as a helical segment. The Mitochondrial intermembrane segment spans residues 196-211 (STYGSCKNLVLNFVDD). A helical membrane pass occupies residues 212-232 (GIYAYIISSMVAGFIVTFGMN). The Mitochondrial matrix segment spans residues 233 to 276 (PFDVARTRLYFQGKGNSHGEIYKGLMDCVYKTVKKEGFGAVYKG). The helical transmembrane segment at 277–295 (FWAHYLRLGPHTILTLVFW) threads the bilayer. Over 296-306 (EQFKKLFSGEL) the chain is Mitochondrial intermembrane.

This sequence belongs to the mitochondrial carrier (TC 2.A.29) family.

The protein localises to the mitochondrion inner membrane. Its function is as follows. Mitochondrial solute carriers shuttle metabolites, nucleotides, and cofactors through the mitochondrial inner membrane. Transports oxaloacetate and sulfate. This Dictyostelium discoideum (Social amoeba) protein is Mitochondrial substrate carrier family protein ucpA (ucpA).